A 198-amino-acid polypeptide reads, in one-letter code: MSDTPVVVIPRKGYVDGHHGYHHSYHSGLNLLLRLLQAFATAAAVIVMLLATQTEFTRYGEVRGRWRDYPAYKWFIIANAVVFVYALLATLVACCALIARRGPLSYSPSAWLTFLLDFVAASALMSAASAALAVALIARNGQNLQGQHYWPTFCNYVTRFCDYAQGAIIASFCGFGLLALSTLLAASALHHLAWHRLH.

The Cytoplasmic segment spans residues 1 to 30; that stretch reads MSDTPVVVIPRKGYVDGHHGYHHSYHSGLN. Residues 31-51 traverse the membrane as a helical segment; the sequence is LLLRLLQAFATAAAVIVMLLA. At 52–73 the chain is on the extracellular side; sequence TQTEFTRYGEVRGRWRDYPAYK. Residues 74-94 form a helical membrane-spanning segment; the sequence is WFIIANAVVFVYALLATLVAC. Residues 95-117 lie on the Cytoplasmic side of the membrane; it reads CALIARRGPLSYSPSAWLTFLLD. The chain crosses the membrane as a helical span at residues 118-138; that stretch reads FVAASALMSAASAALAVALIA. Topologically, residues 139–165 are extracellular; it reads RNGQNLQGQHYWPTFCNYVTRFCDYAQ. The chain crosses the membrane as a helical span at residues 166–186; that stretch reads GAIIASFCGFGLLALSTLLAA. Topologically, residues 187-198 are cytoplasmic; that stretch reads SALHHLAWHRLH.

It belongs to the Casparian strip membrane proteins (CASP) family. Homodimer and heterodimers.

It localises to the cell membrane. The polypeptide is CASP-like protein 1U1 (Physcomitrium patens (Spreading-leaved earth moss)).